The primary structure comprises 414 residues: TnpB-like protein MJ1635 (414 aa).

C329, C332, C346, and C349 together coordinate Zn(2+).

In the N-terminal section; belongs to the transposase 2 family. This sequence in the C-terminal section; belongs to the transposase 35 family.

The protein is TnpB-like protein MJ1635 of Methanocaldococcus jannaschii (strain ATCC 43067 / DSM 2661 / JAL-1 / JCM 10045 / NBRC 100440) (Methanococcus jannaschii).